Reading from the N-terminus, the 128-residue chain is Nucleoside diphosphate kinase B (128 aa).

Met1 carries the N-acetylmethionine modification. 5 residues coordinate ATP: Lys9, Phe39, Thr70, Arg81, and Asn91. The Pros-phosphohistidine intermediate role is filled by His94.

This sequence belongs to the NDK family. Mg(2+) serves as cofactor.

The protein resides in the cytoplasm. It localises to the nucleus. Its subcellular location is the cell projection. It is found in the lamellipodium. The protein localises to the ruffle. The catalysed reaction is a 2'-deoxyribonucleoside 5'-diphosphate + ATP = a 2'-deoxyribonucleoside 5'-triphosphate + ADP. It carries out the reaction a ribonucleoside 5'-diphosphate + ATP = a ribonucleoside 5'-triphosphate + ADP. Functionally, major role in the synthesis of nucleoside triphosphates other than ATP. This chain is Nucleoside diphosphate kinase B (nme2), found in Merluccius australis australis (Austral hake).